Here is a 116-residue protein sequence, read N- to C-terminus: U30-theraphotoxin-Cg1a (116 aa).

An N-terminal signal peptide occupies residues 1-17 (MKLCVLTIASLLVTVTS). Residues 18–53 (LETQKEIAEGSELTREETPSLVEHKEDEAAAASEKR) constitute a propeptide that is removed on maturation. The tract at residues 24-46 (IAEGSELTREETPSLVEHKEDEA) is disordered. 4 cysteine pairs are disulfide-bonded: Cys-55–Cys-69, Cys-62–Cys-75, Cys-66–Cys-112, and Cys-68–Cys-88.

This sequence belongs to the neurotoxin 03 (Tx2) family. 02 subfamily. HNTX-XV sub-subfamily. Expressed by the venom gland.

It is found in the secreted. Functionally, probable ion channel inhibitor. In Chilobrachys guangxiensis (Chinese earth tiger tarantula), this protein is U30-theraphotoxin-Cg1a.